We begin with the raw amino-acid sequence, 384 residues long: Galactokinase (384 aa).

A substrate-binding site is contributed by 35 to 38 (EHTD). ATP is bound by residues Ser69 and 125–131 (GAGLSSS). Ser131 and Glu163 together coordinate Mg(2+). Catalysis depends on Asp175, which acts as the Proton acceptor. Tyr224 contacts substrate.

It belongs to the GHMP kinase family. GalK subfamily.

The protein localises to the cytoplasm. It carries out the reaction alpha-D-galactose + ATP = alpha-D-galactose 1-phosphate + ADP + H(+). It functions in the pathway carbohydrate metabolism; galactose metabolism. Its function is as follows. Catalyzes the transfer of the gamma-phosphate of ATP to D-galactose to form alpha-D-galactose-1-phosphate (Gal-1-P). The protein is Galactokinase of Aliivibrio fischeri (strain ATCC 700601 / ES114) (Vibrio fischeri).